Here is a 398-residue protein sequence, read N- to C-terminus: Acetate kinase 1 (398 aa).

N9 is a Mg(2+) binding site. K16 is an ATP binding site. R89 contacts substrate. The active-site Proton donor/acceptor is the D146. ATP-binding positions include 206 to 210 (HLGNG), 281 to 283 (DCR), and 329 to 333 (GIGEN). Mg(2+) is bound at residue E384.

Belongs to the acetokinase family. Homodimer. It depends on Mg(2+) as a cofactor. Requires Mn(2+) as cofactor.

Its subcellular location is the cytoplasm. It carries out the reaction acetate + ATP = acetyl phosphate + ADP. It functions in the pathway metabolic intermediate biosynthesis; acetyl-CoA biosynthesis; acetyl-CoA from acetate: step 1/2. Functionally, catalyzes the formation of acetyl phosphate from acetate and ATP. Can also catalyze the reverse reaction. This is Acetate kinase 1 from Vibrio parahaemolyticus serotype O3:K6 (strain RIMD 2210633).